We begin with the raw amino-acid sequence, 593 residues long: UvrABC system protein C (593 aa).

A GIY-YIG domain is found at 13–91 (TTPGVYMMKD…IKEYRPKYNV (79 aa)). The 36-residue stretch at 202–237 (DEIVEELKKKMFEYADNLMFEKAQEIKNKITSLEQI) folds into the UVR domain.

It belongs to the UvrC family. As to quaternary structure, interacts with UvrB in an incision complex.

The protein localises to the cytoplasm. Its function is as follows. The UvrABC repair system catalyzes the recognition and processing of DNA lesions. UvrC both incises the 5' and 3' sides of the lesion. The N-terminal half is responsible for the 3' incision and the C-terminal half is responsible for the 5' incision. This chain is UvrABC system protein C, found in Caldicellulosiruptor saccharolyticus (strain ATCC 43494 / DSM 8903 / Tp8T 6331).